A 41-amino-acid polypeptide reads, in one-letter code: Photosystem II reaction center protein Y (41 aa).

An N-formylmethionine modification is found at Met1. Residues 1 to 4 are Lumenal-facing; the sequence is MDWR. A helical transmembrane segment spans residues 5–23; that stretch reads VLVVLLPVLLAAGWAVRNI. Over 24 to 41 the chain is Cytoplasmic; the sequence is LPYAVKQVQKLLQKAKAA.

Belongs to the PsbY family. As to quaternary structure, PSII is composed of 1 copy each of membrane proteins PsbA, PsbB, PsbC, PsbD, PsbE, PsbF, PsbH, PsbI, PsbJ, PsbK, PsbL, PsbM, PsbT, PsbX, PsbY, PsbZ, Psb30/Ycf12, peripheral proteins PsbO, CyanoQ (PsbQ), PsbU, PsbV and a large number of cofactors. It forms dimeric complexes. This protein is only loosely associated with PSII, and is not often found in crystals. Found on the exterior of the PSII dimer, near cytochrome b559 (psbE and psbF). The cofactor is PSII binds multiple chlorophylls, carotenoids and specific lipids..

Its subcellular location is the cellular thylakoid membrane. In terms of biological role, loosely associated component of the core of photosystem II, it is not always seen in crystals. PSII is a light-driven water plastoquinone oxidoreductase, using light energy to abstract electrons from H(2)O, generating a proton gradient subsequently used for ATP formation. The protein is Photosystem II reaction center protein Y of Thermosynechococcus vestitus (strain NIES-2133 / IAM M-273 / BP-1).